Reading from the N-terminus, the 441-residue chain is Protein MONOCULM 1 (441 aa).

Residues 1–33 (MLRSLHSSSSSDTDNNSGGCKNNGGGGGEAAAA) are disordered. Over residues 7–20 (SSSSSDTDNNSGGC) the composition is skewed to low complexity. Over residues 21–33 (KNNGGGGGEAAAA) the composition is skewed to gly residues. Residues 41–437 (RAVAAAAPST…RPLLSVSAWQ (397 aa)) form the GRAS domain. A leucine repeat I (LRI) region spans residues 48-126 (PSTRDLLLAC…GAARPASSGA (79 aa)). A VHIID region spans residues 127-195 (YLAFNQIAPF…LGPPEVRVTG (69 aa)). The VHIID motif lies at 158 to 162 (VHILD). The interval 205–256 (RTGNRLRAFARSIHLPFHFTPLLLSCATTAPHHVAGTSTGAAAAASTAAAAT) is leucine repeat II (LRII). The tract at residues 266–361 (LAVNCVMFLH…QEVLGREIEA (96 aa)) is PFYRE. The SAW stretch occupies residues 364–437 (GPSGGRWWRG…RPLLSVSAWQ (74 aa)).

The protein belongs to the GRAS family. As to expression, expressed in a small number of epidermal or subepidermal cells at the leaf axils, in axillary meristems and the entire tiller buds. Undetected in the shoot apical meristem.

The protein resides in the nucleus. Putative transcription regulator that controls rice tillering by initiating axillary buds and promoting their outgrowth. Rice tiller is a specialized grain-bearing branch that is formed on the unelongated basal internode and grows independently of the mother stem (culm) by means of its own adventitious roots. In Oryza sativa subsp. japonica (Rice), this protein is Protein MONOCULM 1.